Consider the following 365-residue polypeptide: Adenosine deaminase (365 aa).

Residues His-19 and His-21 each coordinate Zn(2+). Positions 21, 23, and 181 each coordinate substrate. Zn(2+) is bound at residue His-208. The active-site Proton donor is Glu-211. Asp-300 is a binding site for Zn(2+).

The protein belongs to the metallo-dependent hydrolases superfamily. Adenosine and AMP deaminases family. Adenosine deaminase subfamily. The cofactor is Zn(2+).

The enzyme catalyses adenosine + H2O + H(+) = inosine + NH4(+). It carries out the reaction 2'-deoxyadenosine + H2O + H(+) = 2'-deoxyinosine + NH4(+). Functionally, catalyzes the hydrolytic deamination of adenosine and 2-deoxyadenosine. The polypeptide is Adenosine deaminase (Mycobacterium tuberculosis (strain ATCC 25177 / H37Ra)).